Consider the following 149-residue polypeptide: Urease accessory protein UreE (149 aa).

Belongs to the UreE family.

It is found in the cytoplasm. Involved in urease metallocenter assembly. Binds nickel. Probably functions as a nickel donor during metallocenter assembly. The sequence is that of Urease accessory protein UreE from Ureaplasma urealyticum serovar 10 (strain ATCC 33699 / Western).